Consider the following 466-residue polypeptide: Putative proline/betaine transporter (466 aa).

12 helical membrane passes run 20-42 (VVAT…YTTA), 63-83 (FAAL…FGII), 91-111 (VVLT…GLLP), 116-136 (IGLW…FSTG), 164-184 (IGTL…TFFL), 191-211 (SFGW…GLYL), 239-259 (IIRF…FFNV), 285-305 (VLIT…GKLA), 313-332 (VFLI…FMLL), 337-354 (FVVI…LSTY), 377-397 (VTFN…ATWL), and 405-425 (LAPA…ITFL).

The protein belongs to the major facilitator superfamily. Metabolite:H+ Symporter (MHS) family (TC 2.A.1.6) family.

The protein resides in the cell membrane. In terms of biological role, may be a proton symporter involved in the uptake of osmolytes such as proline and glycine betaine. This Staphylococcus aureus (strain MSSA476) protein is Putative proline/betaine transporter (proP).